A 288-amino-acid polypeptide reads, in one-letter code: Ribosomal protein L11 methyltransferase (288 aa).

Residues Thr134, Gly157, Asp179, and Asn224 each contribute to the S-adenosyl-L-methionine site.

Belongs to the methyltransferase superfamily. PrmA family.

It is found in the cytoplasm. It carries out the reaction L-lysyl-[protein] + 3 S-adenosyl-L-methionine = N(6),N(6),N(6)-trimethyl-L-lysyl-[protein] + 3 S-adenosyl-L-homocysteine + 3 H(+). Its function is as follows. Methylates ribosomal protein L11. This chain is Ribosomal protein L11 methyltransferase, found in Caulobacter sp. (strain K31).